The following is a 286-amino-acid chain: Bifunctional protein FolD (286 aa).

Residues glycine 168–glycine 170, threonine 195, and valine 236 each bind NADP(+).

It belongs to the tetrahydrofolate dehydrogenase/cyclohydrolase family. Homodimer.

It carries out the reaction (6R)-5,10-methylene-5,6,7,8-tetrahydrofolate + NADP(+) = (6R)-5,10-methenyltetrahydrofolate + NADPH. It catalyses the reaction (6R)-5,10-methenyltetrahydrofolate + H2O = (6R)-10-formyltetrahydrofolate + H(+). The protein operates within one-carbon metabolism; tetrahydrofolate interconversion. Its function is as follows. Catalyzes the oxidation of 5,10-methylenetetrahydrofolate to 5,10-methenyltetrahydrofolate and then the hydrolysis of 5,10-methenyltetrahydrofolate to 10-formyltetrahydrofolate. This chain is Bifunctional protein FolD, found in Mycolicibacterium fortuitum (Mycobacterium fortuitum).